We begin with the raw amino-acid sequence, 239 residues long: Pimeloyl-[acyl-carrier protein] methyl ester esterase (239 aa).

Substrate-binding positions include W20, S77–M78, and F138–Q142. The Nucleophile role is filled by S77. Residues D192 and H220 contribute to the active site. H220 serves as a coordination point for substrate.

Belongs to the AB hydrolase superfamily. Carboxylesterase BioH family. Monomer.

It is found in the cytoplasm. It carries out the reaction 6-carboxyhexanoyl-[ACP] methyl ester + H2O = 6-carboxyhexanoyl-[ACP] + methanol + H(+). Its pathway is cofactor biosynthesis; biotin biosynthesis. In terms of biological role, the physiological role of BioH is to remove the methyl group introduced by BioC when the pimeloyl moiety is complete. It allows to synthesize pimeloyl-ACP via the fatty acid synthetic pathway through the hydrolysis of the ester bonds of pimeloyl-ACP esters. This is Pimeloyl-[acyl-carrier protein] methyl ester esterase from Legionella pneumophila (strain Lens).